We begin with the raw amino-acid sequence, 2023 residues long: Protein Daple (2023 aa).

The Calponin-homology (CH) domain occupies 11–131 (NFMDSPLVVW…RMLLLILGCA (121 aa)). Coiled-coil stretches lie at residues 250–415 (RQHL…LLEE), 458–1064 (NESA…VEKN), and 1105–1419 (LKQI…QYKF). The disordered stretch occupies residues 1013–1035 (RHEEEAAHSEISQQTLGQTRSLP). Positions 1022 to 1033 (EISQQTLGQTRS) are enriched in polar residues. Disordered stretches follow at residues 1441–1824 (KPKK…GSAS) and 1837–2023 (LRSN…YGCV). A compositionally biased stretch (basic and acidic residues) spans 1442–1460 (PKKESSRERPDAPRERIRS). Over residues 1478–1491 (SAPPPPPPPLPPRQ) the composition is skewed to pro residues. Composition is skewed to polar residues over residues 1497–1518 (DSMN…SSPA) and 1564–1585 (TCST…SSSL). 2 stretches are compositionally biased toward low complexity: residues 1623–1643 (SAEF…KGSL) and 1667–1704 (RLSQ…SPGS). Positions 1700 to 1728 (SSPGSEMVTLEEFLQESNALSPPTVQTGS) match the GBA motif. Composition is skewed to polar residues over residues 1714 to 1727 (QESN…VQTG), 1752 to 1763 (TPTNYVTPTVKT), 1785 to 1799 (LTDT…QTLP), and 1809 to 1824 (ALQQ…GSAS). Positions 1890-1904 (VDPRRLSLAQPRDEF) are enriched in basic and acidic residues. Low complexity predominate over residues 1927-1945 (GSGSSRAGAARSGSAQPRG). Positions 1974–1988 (QEQREAESPLLKKAD) are enriched in basic and acidic residues. Positions 1989 to 2014 (TTNLSYASKEQPTSKPASPDPNNDPQ) are enriched in polar residues. Residues 2020 to 2023 (YGCV) carry the PDZ-binding motif.

This sequence belongs to the CCDC88 family.

It is found in the cytoplasm. The protein resides in the cell junction. Positive regulator of Wnt signaling, acting synergistically with dvl2. Functions upstream of ctnnb1/beta-catenin in the canonical Wnt pathway, and also activates jnk in the Wnt/planar cell polarity (PCP) pathway. Acts as a non-receptor guanine nucleotide exchange factor which binds to and activates guanine nucleotide-binding protein G(i) alpha (Gi-alpha) subunits. This promotes apical cell constriction and subsequent bending of the neural plate during neurulation via arhgef18. The chain is Protein Daple from Danio rerio (Zebrafish).